Reading from the N-terminus, the 362-residue chain is Quinolone epoxide rearrangement protein penF (362 aa).

The active site involves H220. The active-site Broensted acid is the E222.

The protein belongs to the quinolone epoxide rearrangement protein penF family.

It catalyses the reaction [(1'E)-5'-(3',3'-dimethyloxiran-2'-yl)-3'-hydroxy-3'-methylpent-1'-en-1'-yl]-quinolinone B = yaequinolone D. It functions in the pathway secondary metabolite biosynthesis. The protein operates within alkaloid biosynthesis. It participates in mycotoxin biosynthesis. In terms of biological role, quinolone epoxide rearrangement protein; part of the gene cluster that mediates the biosynthesis of penigequinolones, potent insecticidal alkaloids that contain a highly modified 10-carbon prenyl group. The first stage is catalyzed by the nonribosomal peptide synthetase penN that condenses anthranilic acid and O-methyl-L-tyrosine to produce 4'-methoxycyclopeptin. 4'-methoxycyclopeptin is then converted to 4'-methoxydehydrocyclopeptin by the ketoglutarate-dependent dioxygenase penM through dehydrogenation to form a double bond between C-alpha and C-beta of the O-methyltyrosine side chain. PenM also converts its first product methoxydehydrocyclopeptin to 4'-methoxycyclopenin. The following conversion of 4'methoxycyclopenin into 4'-methoxyviridicatin is catalyzed by the cyclopenase penL. 4'-methoxyviridicatin is the precursor of quinolone natural products, and is further converted to quinolinone B. The prenyltransferase penI then catalyzes the canonical Friedel-Crafts alkylation of quinolinone B with dimethylallyl cation to yield dimethylallyl quinolone, which is subjected to FAD-dependent dehydrogenation by the FAD-linked oxidoreductase penH to yield conjugated aryl diene. The delta(3') double bond then serves as the site of the second alkylation with DMAPP catalyzed by the prenyltransferase penG to yield a carbenium ion intermediate, which can be attacked by H(2)O to yield a styrenyl quinolone containing a C3'-hydroxyprenyl chain, or undergo cyclization to yield yaequinolones J1 and J2. The conversion of the styrenyl quinolone into the tetrahydrofuran-containing yaequinolone C is performed by the FAD-dependent monooxygenase penE and involves epoxidation of the terminal C7'-C8' olefin, followed by epoxide ring opening initiated by the C3' hydroxyl group. The predicted cysteine hydrolase penJ acts as an epoxide hydrolase that enhances the rate of the 5-exo-tet cyclization step, increasing the yield of yaequinolone C. PenF catalyzes the cationic rearrangement of the epoxide formed by penE (before ring opening to produce yaequinolone C) into yaequinolone D. Finally, the short-chain dehydrogenase/reductase (SDR)-like reductase penD, catalyzes both the dehydration of yaequinolone D and the reduction of the resulting oxonium to yield penigequinolone. This Penicillium thymicola protein is Quinolone epoxide rearrangement protein penF.